The primary structure comprises 273 residues: Type III pantothenate kinase (273 aa).

Position 5–12 (5–12) interacts with ATP; sequence DVGNSHVV. 112 to 115 lines the substrate pocket; the sequence is GTDL. Aspartate 114 functions as the Proton acceptor in the catalytic mechanism. Residue aspartate 134 coordinates K(+). Threonine 137 lines the ATP pocket. Threonine 189 lines the substrate pocket.

The protein belongs to the type III pantothenate kinase family. As to quaternary structure, homodimer. It depends on NH4(+) as a cofactor. K(+) serves as cofactor.

It localises to the cytoplasm. It carries out the reaction (R)-pantothenate + ATP = (R)-4'-phosphopantothenate + ADP + H(+). It functions in the pathway cofactor biosynthesis; coenzyme A biosynthesis; CoA from (R)-pantothenate: step 1/5. Functionally, catalyzes the phosphorylation of pantothenate (Pan), the first step in CoA biosynthesis. This Treponema pallidum subsp. pallidum (strain SS14) protein is Type III pantothenate kinase.